A 212-amino-acid polypeptide reads, in one-letter code: Ras-related protein Rab-2A (212 aa).

Alanine 2 is modified (N-acetylalanine). Positions 2–19 (AYAYLFKYIIIGDTGVGK) are required for interaction with PRKCI. Residues glycine 16, valine 17, glycine 18, lysine 19, serine 20, cysteine 21, and threonine 38 each contribute to the GTP site. Mg(2+) is bound at residue serine 20. The short motif at 37–42 (LTIGVE) is the Switch 1 element. 2 residues coordinate Mg(2+): threonine 38 and aspartate 61. The Switch 2 motif lies at 63–72 (AGQESFRSIT). 6 residues coordinate GTP: glycine 64, asparagine 119, lysine 120, aspartate 122, alanine 150, and lysine 151. S-geranylgeranyl cysteine attachment occurs at residues cysteine 211 and cysteine 212.

It belongs to the small GTPase superfamily. Rab family. In terms of assembly, interacts with PRKCI. Interacts with TRIP11. Interacts (in GTP-bound form) with GARIN1B. Interacts (GTP-bound) with HOPS complex component VPS39; interaction contributes to obtaining a functional HOPS complex that promotes autophagosome-lysosome membrane fusion driven by STX17-SNAP29-VAMP8. May interact with VPS41. It depends on Mg(2+) as a cofactor. Prenylated. Prenylation is required for association with cellular membranes. Brain and parietal cells.

The protein localises to the endoplasmic reticulum-Golgi intermediate compartment membrane. It is found in the melanosome. The protein resides in the endoplasmic reticulum membrane. It localises to the golgi apparatus membrane. Its subcellular location is the cytoplasmic vesicle. The protein localises to the secretory vesicle. It is found in the acrosome. The protein resides in the autophagosome membrane. The catalysed reaction is GTP + H2O = GDP + phosphate + H(+). Its activity is regulated as follows. Regulated by guanine nucleotide exchange factors (GEFs) which promote the exchange of bound GDP for free GTP, GTPase activating proteins (GAPs) which increase the GTP hydrolysis activity, and GDP dissociation inhibitors (GDIs) which inhibit the dissociation of the nucleotide from the GTPase. Its function is as follows. The small GTPases Rab are key regulators of intracellular membrane trafficking, from the formation of transport vesicles to their fusion with membranes. Rabs cycle between active GTP-bound and inactive GDP-bound states. In their active state, drive transport of vesicular carriers from donor organelles to acceptor organelles to regulate the membrane traffic that maintains organelle identity and morphology. RAB2A regulates autophagy by promoting autophagosome-lysosome fusion via recruitment of the HOPS endosomal tethering complex; this process involves autophagosomal RAB2A and lysosomal RAB39A recruitment of HOPS subcomplexes VPS39-VPS11 and VPS41-VPS16-VPS18-VPS33A, respectively, which assemble into a functional complex to mediate membrane tethering and SNAREs-driven membrane fusion. Required for protein transport from the endoplasmic reticulum to the Golgi complex. Regulates the compacted morphology of the Golgi. Together with RAB2B, redundantly required for efficient autophagic flux. The protein is Ras-related protein Rab-2A (RAB2A) of Oryctolagus cuniculus (Rabbit).